The sequence spans 145 residues: Cuticle protein 5 (145 aa).

The chain is Cuticle protein 5 from Blaberus craniifer (Death's head cockroach).